The following is a 639-amino-acid chain: MSYEALFSPFKVRGLELKNRIVLPGMNTKMAKNKHDIGEDMIAYHVARAKAGCALNIFECVALCPAPHAYMYMGLYTDHHVEQLKKLTDAVHEAGGKMGIQLWHGGFSPQMFFDETNTLETPDTLTVERIHEIVEEFGRGARMAVQAGFDAVEFHAAHSYLPHEFLSPGMNKRTDEYGGSFENRCRFCYEVVQAIRSNIPDDMPFFMRADCIDELMEQTMTEEEIVTFINKCAELGVDVADLSRGNATSFATVYEVPPFNLAHGFNIENIYNIKKQINIPVMGVGRINTGEMANKVIEEGKFDLVGIGRAQLADPNWITKVREGKEDLIRHCIGCDQGCYDAVINPKMKHITCTHNPGLCLEYQGMPKTDAPKKVMIVGGGMAGMIAAEVLKTRGHNPVIFEASDKLAGQFRLAGVAPMKQDWADVAEWEAKEVERLGIEVRLNTEVTAETIKEFNPDNVIIAVGSTYALPEIPGIDSPSVYSQYQVLKGEVNPTGRVAVIGCGLVGTEVAELLASRGAQVIAIERKGVGTGLSMLRRMFMNPEFKYYKIAKMSGTNVTALEQGKVHYIMTDKKTKEVTQGVLECDATVICTGITARPSDGLKARCEELGIPVEVIGDAAGARDCTIATREGYDAGMAI.

FMN is bound at residue glutamine 101. Residue 155-158 (HAAH) coordinates substrate. Tyrosine 160 (proton donor) is an active-site residue. Residues arginine 208, arginine 286, and 308-309 (GR) contribute to the FMN site. Residues cysteine 332 and cysteine 335 each coordinate [4Fe-4S] cluster. Glutamine 337 provides a ligand contact to FAD. Residues cysteine 339 and cysteine 353 each contribute to the [4Fe-4S] cluster site. FAD-binding residues include alanine 383, glutamate 402, glutamine 410, lysine 420, and valine 447.

The protein in the N-terminal section; belongs to the NADH:flavin oxidoreductase/NADH oxidase family. FMN serves as cofactor. FAD is required as a cofactor. It depends on [4Fe-4S] cluster as a cofactor.

It carries out the reaction 7alpha,12alpha-dihydroxy-3-oxochol-24-oyl-CoA + NAD(+) = 7alpha,12alpha-dihydroxy-3-oxochol-4-en-24-oyl-CoA + NADH + H(+). It catalyses the reaction 7alpha-hydroxy-3-oxochol-24-oyl-CoA + NAD(+) = 7alpha-hydroxy-3-oxochol-4-en-24-oyl-CoA + NADH + H(+). Its pathway is lipid metabolism; bile acid degradation. Stereo-specific NAD(H)-dependent 3-oxo-delta4-cholenoic acid oxidoreductase involved in bile acid 7alpha-dehydroxylation. The polypeptide is 3-oxocholoyl-CoA 4-desaturase (Clostridium scindens (strain JCM 10418 / VPI 12708)).